A 78-amino-acid polypeptide reads, in one-letter code: Small ribosomal subunit protein uS15 (78 aa).

Belongs to the universal ribosomal protein uS15 family. In terms of assembly, part of the 30S ribosomal subunit. Forms a bridge to the 50S subunit in the 70S ribosome, contacting the 23S rRNA.

In terms of biological role, one of the primary rRNA binding proteins, it binds directly to 16S rRNA where it helps nucleate assembly of the platform of the 30S subunit by binding and bridging several RNA helices of the 16S rRNA. Forms an intersubunit bridge (bridge B4) with the 23S rRNA of the 50S subunit in the ribosome. This Karelsulcia muelleri (strain GWSS) (Sulcia muelleri) protein is Small ribosomal subunit protein uS15.